The chain runs to 52 residues: Insulin (52 aa).

Cystine bridges form between C7/C38, C19/C51, and C37/C42.

This sequence belongs to the insulin family. In terms of assembly, heterodimer of a B chain and an A chain linked by two disulfide bonds.

Its subcellular location is the secreted. Its function is as follows. Insulin decreases blood glucose concentration. It increases cell permeability to monosaccharides, amino acids and fatty acids. It accelerates glycolysis, the pentose phosphate cycle, and glycogen synthesis in liver. In Amia calva (Bowfin), this protein is Insulin (ins).